An 800-amino-acid chain; its full sequence is Protein SPT2 homolog (800 aa).

The segment at 1-687 is important for interaction with DNA; that stretch reads MDFHSVLRMA…PGHRPNMQPP (687 aa). Residues 53 to 82 are a coiled coil; sequence QEIQNKEVEAKRKKEGLLAKRKELKHDRKA. Disordered regions lie at residues 70–173, 197–646, and 661–698; these read LAKR…PALN, KEER…MAKP, and VPKS…TSSY. The span at 124 to 137 shows a compositional bias: acidic residues; sequence TEEDEEYMTEEELY. The span at 155 to 164 shows a compositional bias: low complexity; sequence PQKVAKAAPG. Residues 196–224 are a coiled coil; the sequence is KKEERLRTAEELKELEFLERKAQKADRKD. 2 stretches are compositionally biased toward basic and acidic residues: residues 197-226 and 249-259; these read KEER…KDPM and HSVEKRSHENS. Positions 260–272 are enriched in polar residues; it reads KSSSTEQNGTFRK. Positions 273–295 are enriched in basic and acidic residues; the sequence is SSSDNRSREEKSGSVFHTKDSKF. Composition is skewed to low complexity over residues 328 to 360, 367 to 377, 390 to 424, 443 to 501, and 514 to 581; these read SGST…SSGK, SSSARSSSGSG, GASG…SVGA, GVSG…SVSG, and GAPG…ASSS. Residues 608–626 show a composition bias toward polar residues; sequence NSVRHNTTSISVSARSSLG. Positions 684-693 are enriched in pro residues; that stretch reads MQPPGRPLPP. Residues 688–800 form an important for interaction with histones region; the sequence is GRPLPPITSS…LKSAKKMKSR (113 aa). Residues 756–800 adopt a coiled-coil conformation; the sequence is REQQKEEARSLRLGIQEDLEELRREEEELKQKAKQLKSAKKMKSR.

The protein belongs to the SPT2 family. As to quaternary structure, interacts with histones. Interacts with a heterotetrameric complex formed by histone H3 and H4, especially when the histone tetramer is not bound to DNA.

It is found in the nucleus. The protein localises to the nucleolus. Histone chaperone that stabilizes pre-existing histone tetramers and regulates replication-independent histone exchange on chromatin. Required for normal chromatin refolding in the coding region of transcribed genes, and for the suppression of spurious transcription. Binds DNA and histones and promotes nucleosome assembly (in vitro). Facilitates formation of tetrameric histone complexes containing histone H3 and H4. Modulates RNA polymerase 1-mediated transcription. Binds DNA, with a preference for branched DNA species, such as Y-form DNA and Holliday junction DNA. The protein is Protein SPT2 homolog (spty2d1) of Xenopus laevis (African clawed frog).